A 469-amino-acid chain; its full sequence is Neuraminidase (469 aa).

Over 1-9 the chain is Intravirion; sequence MNPNQKIIT. A helical transmembrane segment spans residues 10 to 30; it reads IGSVSLTIATICFLMQIAILV. An involved in apical transport and lipid raft association region spans residues 11–33; that stretch reads GSVSLTIATICFLMQIAILVTTV. At 31 to 469 the chain is on the virion surface side; the sequence is TTVTLHFKQY…DGADINLMPI (439 aa). Residues 36 to 88 are hypervariable stalk region; it reads HFKQYECDSPANNQVMPCEPIIIERNITEIVYLTNTTIEKEICPKLVEYRNWS. N-linked (GlcNAc...) asparagine; by host glycosylation is found at Asn-61, Asn-70, and Asn-86. Residues 91 to 469 form a head of neuraminidase region; sequence QCKITGFAPF…DGADINLMPI (379 aa). Cystine bridges form between Cys-92–Cys-417, Cys-124–Cys-129, Cys-183–Cys-230, Cys-232–Cys-237, Cys-278–Cys-291, Cys-280–Cys-289, Cys-318–Cys-337, and Cys-421–Cys-447. Arg-118 serves as a coordination point for substrate. Residue Asn-146 is glycosylated (N-linked (GlcNAc...) asparagine; by host). Catalysis depends on Asp-151, which acts as the Proton donor/acceptor. Position 152 (Arg-152) interacts with substrate. Asn-200 and Asn-234 each carry an N-linked (GlcNAc...) asparagine; by host glycan. 276 to 277 serves as a coordination point for substrate; the sequence is EE. Arg-292 is a substrate binding site. Asp-293, Gly-297, and Asp-324 together coordinate Ca(2+). Arg-371 is a binding site for substrate. N-linked (GlcNAc...) asparagine; by host glycosylation is present at Asn-402. Tyr-406 (nucleophile) is an active-site residue.

Belongs to the glycosyl hydrolase 34 family. Homotetramer. It depends on Ca(2+) as a cofactor. N-glycosylated.

Its subcellular location is the virion membrane. It localises to the host apical cell membrane. The catalysed reaction is Hydrolysis of alpha-(2-&gt;3)-, alpha-(2-&gt;6)-, alpha-(2-&gt;8)- glycosidic linkages of terminal sialic acid residues in oligosaccharides, glycoproteins, glycolipids, colominic acid and synthetic substrates.. Inhibited by the neuraminidase inhibitors zanamivir (Relenza) and oseltamivir (Tamiflu). These drugs interfere with the release of progeny virus from infected cells and are effective against all influenza strains. Resistance to neuraminidase inhibitors is quite rare. In terms of biological role, catalyzes the removal of terminal sialic acid residues from viral and cellular glycoconjugates. Cleaves off the terminal sialic acids on the glycosylated HA during virus budding to facilitate virus release. Additionally helps virus spread through the circulation by further removing sialic acids from the cell surface. These cleavages prevent self-aggregation and ensure the efficient spread of the progeny virus from cell to cell. Otherwise, infection would be limited to one round of replication. Described as a receptor-destroying enzyme because it cleaves a terminal sialic acid from the cellular receptors. May facilitate viral invasion of the upper airways by cleaving the sialic acid moieties on the mucin of the airway epithelial cells. Likely to plays a role in the budding process through its association with lipid rafts during intracellular transport. May additionally display a raft-association independent effect on budding. Plays a role in the determination of host range restriction on replication and virulence. Sialidase activity in late endosome/lysosome traffic seems to enhance virus replication. This chain is Neuraminidase, found in Aves (whales).